We begin with the raw amino-acid sequence, 71 residues long: Small ribosomal subunit protein bS21 (71 aa).

The segment at 38 to 71 is disordered; it reads YEKPTTVRKRAKAAAQKRHAKKLSRENARRVRLY. Residues 43-59 show a composition bias toward basic residues; the sequence is TVRKRAKAAAQKRHAKK. The segment covering 60-71 has biased composition (basic and acidic residues); that stretch reads LSRENARRVRLY.

This sequence belongs to the bacterial ribosomal protein bS21 family.

The polypeptide is Small ribosomal subunit protein bS21 (Aliivibrio fischeri (strain ATCC 700601 / ES114) (Vibrio fischeri)).